A 260-amino-acid polypeptide reads, in one-letter code: MMWSNFFMQEEDRRRTAVGRRRAQEQQNLGLTPEREGKIKLGLLVAIVGATLAVLAVGTEFWVELNTYKTNGSAVCEAAHLGLWKVCIKRLWQADVPAGRETCGPAELPGEANCTYFKFFTTGENAHIFQRTTKKEVNLAAAVIAVLGLTAMALGCLCVIMVLSKGAEFLLRLGAVCFGLSGLLLFVSLEVFRHSVRALLQGVNPETPPAPRLAYEYSWSLGCGVGAGLILLLGGVCFLLLTLPSWPWRSLCPKRGGPTA.

4 helical membrane-spanning segments follow: residues 43–63 (LLVA…EFWV), 143–163 (VIAV…IMVL), 169–189 (FLLR…FVSL), and 221–241 (LGCG…FLLL).

The protein belongs to the PMP-22/EMP/MP20 family. CACNG subfamily. Interacts with CACNA1C. Identified in a complex with the L-type calcium channel subunits CACNA1C, CACNA2D1 and either CACNB1 or CACNB2. In terms of tissue distribution, detected in heart atrium and ventricle, aorta and skeletal muscle. Detected in heart left ventricle.

Its subcellular location is the cell membrane. Regulates the activity of L-type calcium channels that contain CACNA1C as pore-forming subunit. This chain is Voltage-dependent calcium channel gamma-6 subunit (Cacng6), found in Rattus norvegicus (Rat).